The sequence spans 158 residues: Cyclic pyranopterin monophosphate synthase (158 aa).

Substrate-binding positions include 75–77 (LCH) and 113–114 (ME). Aspartate 128 is a catalytic residue.

The protein belongs to the MoaC family. As to quaternary structure, homohexamer; trimer of dimers.

It carries out the reaction (8S)-3',8-cyclo-7,8-dihydroguanosine 5'-triphosphate = cyclic pyranopterin phosphate + diphosphate. The protein operates within cofactor biosynthesis; molybdopterin biosynthesis. In terms of biological role, catalyzes the conversion of (8S)-3',8-cyclo-7,8-dihydroguanosine 5'-triphosphate to cyclic pyranopterin monophosphate (cPMP). The sequence is that of Cyclic pyranopterin monophosphate synthase from Roseiflexus castenholzii (strain DSM 13941 / HLO8).